The following is a 283-amino-acid chain: ATP phosphoribosyltransferase (283 aa).

This sequence belongs to the ATP phosphoribosyltransferase family. Long subfamily. The cofactor is Mg(2+).

It localises to the cytoplasm. It carries out the reaction 1-(5-phospho-beta-D-ribosyl)-ATP + diphosphate = 5-phospho-alpha-D-ribose 1-diphosphate + ATP. It functions in the pathway amino-acid biosynthesis; L-histidine biosynthesis; L-histidine from 5-phospho-alpha-D-ribose 1-diphosphate: step 1/9. With respect to regulation, feedback inhibited by histidine. Its function is as follows. Catalyzes the condensation of ATP and 5-phosphoribose 1-diphosphate to form N'-(5'-phosphoribosyl)-ATP (PR-ATP). Has a crucial role in the pathway because the rate of histidine biosynthesis seems to be controlled primarily by regulation of HisG enzymatic activity. The sequence is that of ATP phosphoribosyltransferase from Ignicoccus hospitalis (strain KIN4/I / DSM 18386 / JCM 14125).